Consider the following 620-residue polypeptide: Probable potassium transport system protein Kup 1 (620 aa).

Helical transmembrane passes span 7-27 (GIGL…TSPL), 50-70 (VLSL…VIVI), 102-122 (MMLG…TPAI), 136-156 (PDLK…LFAI), 168-188 (FGPV…ANIV), 211-231 (LMSF…EALY), 246-266 (WFGL…ALLI), 284-304 (MVVP…QAVI), 336-356 (IYVP…VVGF), 368-388 (IAVT…AALL), 393-413 (PVVV…FFAA), and 415-435 (IIKV…SFTV).

The protein belongs to the HAK/KUP transporter (TC 2.A.72) family.

Its subcellular location is the cell inner membrane. The catalysed reaction is K(+)(in) + H(+)(in) = K(+)(out) + H(+)(out). Functionally, transport of potassium into the cell. Likely operates as a K(+):H(+) symporter. This chain is Probable potassium transport system protein Kup 1, found in Rhodopseudomonas palustris (strain ATCC BAA-98 / CGA009).